We begin with the raw amino-acid sequence, 541 residues long: Membrane protein insertase YidC (541 aa).

Transmembrane regions (helical) follow at residues 7 to 27, 340 to 360, 415 to 435, 453 to 473, and 494 to 514; these read LFLVALLFVSFLIWQAWQTDH, QLIHSFVGNWGFAIIIITFIV, LGGCFPLLIQMPIFLALYYML, LAAPDPFYILPILMGVTMFFI, and PVIFTVFFLWFPSGLVLYYIV.

This sequence belongs to the OXA1/ALB3/YidC family. Type 1 subfamily. In terms of assembly, interacts with the Sec translocase complex via SecD. Specifically interacts with transmembrane segments of nascent integral membrane proteins during membrane integration.

The protein resides in the cell inner membrane. Required for the insertion and/or proper folding and/or complex formation of integral membrane proteins into the membrane. Involved in integration of membrane proteins that insert both dependently and independently of the Sec translocase complex, as well as at least some lipoproteins. Aids folding of multispanning membrane proteins. This Edwardsiella ictaluri (strain 93-146) protein is Membrane protein insertase YidC.